Reading from the N-terminus, the 483-residue chain is General transcription factor IIH subunit 4 (483 aa).

Residues 93 to 117 form a disordered region; that stretch reads PQQQQSSQQSSSQQQQQQQQQQQQT. A compositionally biased stretch (low complexity) spans 94–116; sequence QQQQSSQQSSSQQQQQQQQQQQQ.

This sequence belongs to the TFB2 family. Component of the 7-subunit TFIIH core complex composed of XPB/repB, XPD/repD, gtf2h1, gtf2h2, gtf2h3, gtf2h4 and gtf2h5, which is active in NER. The core complex associates with the 3-subunit CDK-activating kinase (CAK) module composed of cycH/cyclin H, cdk7 and mnat1 to form the 10-subunit holoenzyme (holo-TFIIH) active in transcription.

The protein localises to the nucleus. Component of the general transcription and DNA repair factor IIH (TFIIH) core complex, which is involved in general and transcription-coupled nucleotide excision repair (NER) of damaged DNA and, when complexed to CAK, in RNA transcription by RNA polymerase II. In NER, TFIIH acts by opening DNA around the lesion to allow the excision of the damaged oligonucleotide and its replacement by a new DNA fragment. In transcription, TFIIH has an essential role in transcription initiation. When the pre-initiation complex (PIC) has been established, TFIIH is required for promoter opening and promoter escape. Phosphorylation of the C-terminal tail (CTD) of the largest subunit of RNA polymerase II by the kinase module CAK controls the initiation of transcription. The chain is General transcription factor IIH subunit 4 (gtf2h4) from Dictyostelium discoideum (Social amoeba).